A 201-amino-acid chain; its full sequence is ADP-ribosylation factor-related protein 1 (201 aa).

Position 1 is an N-acetylmethionine (Met1). Residues Gly24–Thr31, Asp75–Gln79, and Asn134–Asp137 contribute to the GTP site.

The protein belongs to the small GTPase superfamily. Arf family. As to quaternary structure, interacts with SYS1.

The protein localises to the golgi apparatus. It is found in the trans-Golgi network. Functionally, trans-Golgi-associated GTPase that regulates protein sorting. Controls the targeting of ARL1 and its effector to the trans-Golgi. Required for the lipidation of chylomicrons in the intestine and required for VLDL lipidation in the liver. The polypeptide is ADP-ribosylation factor-related protein 1 (ARFRP1) (Bos taurus (Bovine)).